The chain runs to 415 residues: Serine hydroxymethyltransferase (415 aa).

(6S)-5,6,7,8-tetrahydrofolate is bound by residues Leu117 and 121 to 123; that span reads GHL. Position 226 is an N6-(pyridoxal phosphate)lysine (Lys226).

This sequence belongs to the SHMT family. Homodimer. Requires pyridoxal 5'-phosphate as cofactor.

It is found in the cytoplasm. The catalysed reaction is (6R)-5,10-methylene-5,6,7,8-tetrahydrofolate + glycine + H2O = (6S)-5,6,7,8-tetrahydrofolate + L-serine. Its pathway is one-carbon metabolism; tetrahydrofolate interconversion. The protein operates within amino-acid biosynthesis; glycine biosynthesis; glycine from L-serine: step 1/1. Catalyzes the reversible interconversion of serine and glycine with tetrahydrofolate (THF) serving as the one-carbon carrier. This reaction serves as the major source of one-carbon groups required for the biosynthesis of purines, thymidylate, methionine, and other important biomolecules. Also exhibits THF-independent aldolase activity toward beta-hydroxyamino acids, producing glycine and aldehydes, via a retro-aldol mechanism. This Dehalococcoides mccartyi (strain ATCC BAA-2266 / KCTC 15142 / 195) (Dehalococcoides ethenogenes (strain 195)) protein is Serine hydroxymethyltransferase.